Here is a 622-residue protein sequence, read N- to C-terminus: uncharacterized protein (622 aa).

A signal peptide spans Met-1 to Ser-20.

This is an uncharacterized protein from Methanocaldococcus jannaschii (strain ATCC 43067 / DSM 2661 / JAL-1 / JCM 10045 / NBRC 100440) (Methanococcus jannaschii).